The primary structure comprises 55 residues: Large ribosomal subunit protein bL33 (55 aa).

The protein belongs to the bacterial ribosomal protein bL33 family.

This Agrobacterium fabrum (strain C58 / ATCC 33970) (Agrobacterium tumefaciens (strain C58)) protein is Large ribosomal subunit protein bL33.